The primary structure comprises 123 residues: Large ribosomal subunit protein eL8 (123 aa).

It belongs to the eukaryotic ribosomal protein eL8 family. As to quaternary structure, part of the 50S ribosomal subunit. Probably part of the RNase P complex.

The protein localises to the cytoplasm. In terms of biological role, multifunctional RNA-binding protein that recognizes the K-turn motif in ribosomal RNA, the RNA component of RNase P, box H/ACA, box C/D and box C'/D' sRNAs. This is Large ribosomal subunit protein eL8 from Methanopyrus kandleri (strain AV19 / DSM 6324 / JCM 9639 / NBRC 100938).